Reading from the N-terminus, the 98-residue chain is MTHIMFTFSTAFMLGLSGLTFNRTHLLSALLCLEGMMLSLFIALAMWCTQNETMMFSSAPLLLLALSACEAGLGLSLLVATARAHGSDHLQNLNLLQC.

The next 3 helical transmembrane spans lie at 1 to 21, 26 to 46, and 59 to 79; these read MTHI…GLTF, LLSA…ALAM, and APLL…SLLV.

The protein belongs to the complex I subunit 4L family.

The protein localises to the mitochondrion membrane. The enzyme catalyses a ubiquinone + NADH + 5 H(+)(in) = a ubiquinol + NAD(+) + 4 H(+)(out). Functionally, core subunit of the mitochondrial membrane respiratory chain NADH dehydrogenase (Complex I) which catalyzes electron transfer from NADH through the respiratory chain, using ubiquinone as an electron acceptor. Part of the enzyme membrane arm which is embedded in the lipid bilayer and involved in proton translocation. This is NADH-ubiquinone oxidoreductase chain 4L (MT-ND4L) from Polypterus ornatipinnis (Ornate bichir).